Consider the following 207-residue polypeptide: Small ribosomal subunit protein uS4 (207 aa).

One can recognise an S4 RNA-binding domain in the interval 96-156 (RRLDNVVYRL…EKFKTSSFIA (61 aa)).

It belongs to the universal ribosomal protein uS4 family. In terms of assembly, part of the 30S ribosomal subunit. Contacts protein S5. The interaction surface between S4 and S5 is involved in control of translational fidelity.

Its function is as follows. One of the primary rRNA binding proteins, it binds directly to 16S rRNA where it nucleates assembly of the body of the 30S subunit. With S5 and S12 plays an important role in translational accuracy. The polypeptide is Small ribosomal subunit protein uS4 (Leptospira interrogans serogroup Icterohaemorrhagiae serovar copenhageni (strain Fiocruz L1-130)).